The chain runs to 81 residues: Small ribosomal subunit protein bS18 (81 aa).

It belongs to the bacterial ribosomal protein bS18 family. Part of the 30S ribosomal subunit. Forms a tight heterodimer with protein bS6.

Its function is as follows. Binds as a heterodimer with protein bS6 to the central domain of the 16S rRNA, where it helps stabilize the platform of the 30S subunit. The protein is Small ribosomal subunit protein bS18 of Chlamydia muridarum (strain MoPn / Nigg).